The primary structure comprises 187 residues: Protein dj-1beta (187 aa).

Position 45 is a cysteine sulfinic acid (-SO2H) (Cys-45). Cys-104 functions as the Nucleophile in the catalytic mechanism. Cysteine sulfinic acid (-SO2H); alternate is present on Cys-104.

In terms of processing, oxidation of Cys-45 and Cys-104 in response to oxidative stress. Levels of oxidation increase with age. As to expression, expressed in the head and testis (at protein level). Ubiquitously expressed at constant levels.

The protein localises to the mitochondrion. The protein resides in the cytoplasm. Its subcellular location is the nucleus. Plays an important role in cell protection against oxidative stress and cell death by acting as a oxidative stress sensor. Does not play a role in methylglyoxal detoxification. Plays a role in mitochondrial function together with Pink1. In motor neurons regulates structural synaptic plasticity of locomotor behavior as part of the PTEN-phosphatidylinositol 3-kinase pathway in response to oxygen species (ROS) levels. The sequence is that of Protein dj-1beta from Drosophila melanogaster (Fruit fly).